The sequence spans 104 residues: UPF0145 protein HCH_01985 (104 aa).

It belongs to the UPF0145 family.

The chain is UPF0145 protein HCH_01985 from Hahella chejuensis (strain KCTC 2396).